We begin with the raw amino-acid sequence, 485 residues long: Glutamate--tRNA ligase (485 aa).

Arginine 6 contributes to the L-glutamate binding site. The short motif at 9-19 is the 'HIGH' region element; it reads PSPTGNLHIGT. L-glutamate is bound by residues tyrosine 192 and 210 to 214; that span reads RGEDH. A 'KMSKS' region motif is present at residues 248–252; sequence KLSKR. ATP is bound at residue lysine 251.

It belongs to the class-I aminoacyl-tRNA synthetase family. Glutamate--tRNA ligase type 1 subfamily. In terms of assembly, monomer. Requires Does not require zinc. as cofactor.

The protein resides in the cytoplasm. The catalysed reaction is tRNA(Glu) + L-glutamate + ATP = L-glutamyl-tRNA(Glu) + AMP + diphosphate. Its function is as follows. Non-discriminating glutamyl-tRNA synthetase. Catalyzes the attachment of glutamate to tRNA(Glu) in a two-step reaction: glutamate is first activated by ATP to form Glu-AMP and then transferred to the acceptor end of tRNA(Glu). Acylates both tRNA(Glu) and tRNA(Gln) with glutamate, but has 13-fold higher efficiency with tRNA(Glu). This chain is Glutamate--tRNA ligase (gltX), found in Thermosynechococcus vestitus (strain NIES-2133 / IAM M-273 / BP-1).